Reading from the N-terminus, the 940-residue chain is Serine/threonine-protein kinase PLK4 (940 aa).

A Protein kinase domain is found at 12-265 (FKVLTLLGKG…LSAVLDHPFM (254 aa)). ATP is bound by residues 18-26 (LGKGSFACV) and K41. D136 acts as the Proton acceptor in catalysis. 2 disordered regions span residues 262–353 (HPFM…DLSR) and 409–529 (RLFP…DAFV). A compositionally biased stretch (low complexity) spans 273-305 (SKDSGSSNGGSIDSGIATISTASNATNNSSSSR). 3 stretches are compositionally biased toward polar residues: residues 337–349 (FKSG…NSQD), 440–465 (NPAS…QPWF), and 494–519 (GTQT…QHNN). In terms of domain architecture, Cryptic POLO box 1 (CPB1) spans 563–676 (CLKKSFPPLC…TKFVQLVKSK (114 aa)). Residues 677–791 (TPKVTLYTKF…GRRPVNPVPP (115 aa)) enclose the Cryptic POLO box 2 (CPB2) domain. In terms of domain architecture, POLO box spans 857-935 (KVLKSIFVPN…LSSILGLLAN (79 aa)).

The protein belongs to the protein kinase superfamily. Ser/Thr protein kinase family. CDC5/Polo subfamily. Homodimer. In terms of processing, ubiquitinated; leading to its degradation by the proteasome.

Its subcellular location is the cytoplasm. It localises to the cytoskeleton. It is found in the microtubule organizing center. The protein localises to the centrosome. The protein resides in the centriole. It carries out the reaction L-seryl-[protein] + ATP = O-phospho-L-seryl-[protein] + ADP + H(+). It catalyses the reaction L-threonyl-[protein] + ATP = O-phospho-L-threonyl-[protein] + ADP + H(+). Serine/threonine-protein kinase that plays a central role in centriole duplication. Able to trigger procentriole formation on the surface of the parental centriole cylinder, leading to the recruitment of centriole biogenesis proteins such as sass6, cpap, ccp110, cep135 and gamma-tubulin. When overexpressed, it is able to induce centrosome amplification through the simultaneous generation of multiple procentrioles adjoining each parental centriole during S phase. Its central role in centriole replication suggests a possible role in tumorigenesis, centrosome aberrations being frequently observed in tumors. Also involved in deuterosome-mediated centriole amplification in multiciliated that can generate more than 100 centrioles. This is Serine/threonine-protein kinase PLK4 from Danio rerio (Zebrafish).